We begin with the raw amino-acid sequence, 49 residues long: Large ribosomal subunit protein bL33B (49 aa).

This sequence belongs to the bacterial ribosomal protein bL33 family.

The chain is Large ribosomal subunit protein bL33B from Bacillus cytotoxicus (strain DSM 22905 / CIP 110041 / 391-98 / NVH 391-98).